Here is a 434-residue protein sequence, read N- to C-terminus: V-type ATP synthase beta chain (434 aa).

Belongs to the ATPase alpha/beta chains family.

In terms of biological role, produces ATP from ADP in the presence of a proton gradient across the membrane. The V-type beta chain is a regulatory subunit. The protein is V-type ATP synthase beta chain of Borreliella afzelii (strain PKo) (Borrelia afzelii).